Reading from the N-terminus, the 541-residue chain is uncharacterized protein (541 aa).

It localises to the virion. This is an uncharacterized protein from Acanthamoeba polyphaga mimivirus (APMV).